Here is a 415-residue protein sequence, read N- to C-terminus: Tyrosine--tRNA ligase (415 aa).

A 'HIGH' region motif is present at residues 54–63 (PTGSNIHLGH). A 'KMSKS' region motif is present at residues 248–252 (KMSKT). Lys251 provides a ligand contact to ATP. Residues 351–415 (AKAFYLMSAV…GKKTFRRLTA (65 aa)) form the S4 RNA-binding domain.

Belongs to the class-I aminoacyl-tRNA synthetase family. TyrS type 2 subfamily. In terms of assembly, homodimer.

The protein localises to the cytoplasm. The enzyme catalyses tRNA(Tyr) + L-tyrosine + ATP = L-tyrosyl-tRNA(Tyr) + AMP + diphosphate + H(+). In terms of biological role, catalyzes the attachment of tyrosine to tRNA(Tyr) in a two-step reaction: tyrosine is first activated by ATP to form Tyr-AMP and then transferred to the acceptor end of tRNA(Tyr). This chain is Tyrosine--tRNA ligase, found in Synechococcus sp. (strain CC9902).